We begin with the raw amino-acid sequence, 716 residues long: Polyribonucleotide nucleotidyltransferase (716 aa).

Mg(2+)-binding residues include Asp-485 and Asp-491. A KH domain is found at 552–611 (PRFTTIKIDQDKIKDVIGKGGAVIRELTESTNTNIEIGDDGTIKVAASDQADADAAIEKI). The region spanning 621-689 (GKIYQGKVAR…RQGRVRLSMK (69 aa)) is the S1 motif domain. Basic and acidic residues predominate over residues 689–698 (KEAAEKKEEP). A disordered region spans residues 689–716 (KEAAEKKEEPAPEAPAEPAAEEENKSEE). Positions 707–716 (AAEEENKSEE) are enriched in acidic residues.

The protein belongs to the polyribonucleotide nucleotidyltransferase family. In terms of assembly, component of the RNA degradosome, which is a multiprotein complex involved in RNA processing and mRNA degradation. Mg(2+) is required as a cofactor.

The protein resides in the cytoplasm. The enzyme catalyses RNA(n+1) + phosphate = RNA(n) + a ribonucleoside 5'-diphosphate. In terms of biological role, involved in mRNA degradation. Catalyzes the phosphorolysis of single-stranded polyribonucleotides processively in the 3'- to 5'-direction. The polypeptide is Polyribonucleotide nucleotidyltransferase (Idiomarina loihiensis (strain ATCC BAA-735 / DSM 15497 / L2-TR)).